An 892-amino-acid polypeptide reads, in one-letter code: Translation initiation factor IF-2 (892 aa).

A disordered region spans residues 88–305; it reads KKRTFVKRDP…SLQQGFQKPA (218 aa). Basic and acidic residues-rich tracts occupy residues 93–159 and 166–216; these read VKRD…KDKV and DMTK…EENK. Basic residues predominate over residues 254 to 269; the sequence is GRGRNAKAARPAKKGK. A compositionally biased stretch (basic and acidic residues) spans 270–282; sequence HAESKADREEARA. Residues 391-560 enclose the tr-type G domain; the sequence is PRAPVVTIMG…LLQAEVLELK (170 aa). The tract at residues 400 to 407 is G1; sequence GHVDHGKT. 400-407 contributes to the GTP binding site; the sequence is GHVDHGKT. The interval 425–429 is G2; it reads GITQH. The interval 446 to 449 is G3; that stretch reads DTPG. GTP contacts are provided by residues 446-450 and 500-503; these read DTPGH and NKID. Positions 500 to 503 are G4; the sequence is NKID. A G5 region spans residues 536–538; the sequence is SAK.

The protein belongs to the TRAFAC class translation factor GTPase superfamily. Classic translation factor GTPase family. IF-2 subfamily.

It is found in the cytoplasm. One of the essential components for the initiation of protein synthesis. Protects formylmethionyl-tRNA from spontaneous hydrolysis and promotes its binding to the 30S ribosomal subunits. Also involved in the hydrolysis of GTP during the formation of the 70S ribosomal complex. The chain is Translation initiation factor IF-2 from Salmonella paratyphi A (strain ATCC 9150 / SARB42).